A 215-amino-acid polypeptide reads, in one-letter code: Eukaryotic translation initiation factor 4E (215 aa).

Residues 1 to 27 (MAERDSEPRVNIIRPDDEPEVEEERVP) are disordered. Ser207 bears the Phosphoserine; by PKC mark.

It belongs to the eukaryotic initiation factor 4E family. As to quaternary structure, eIF4F is a multi-subunit complex, the composition of which varies with external and internal environmental conditions. It is composed of at least eIF4A, eIF4E and eIF4G. eIF4E is also known to interact with other partners. Phosphorylation increases the ability of the protein to bind to mRNA caps and to form the eIF4F complex.

Its function is as follows. Recognizes and binds the 7-methylguanosine-containing mRNA cap during an early step in the initiation of protein synthesis and facilitates ribosome binding by inducing the unwinding of the mRNAs secondary structures. The polypeptide is Eukaryotic translation initiation factor 4E (Aplysia californica (California sea hare)).